A 331-amino-acid chain; its full sequence is Pectate lyase B (331 aa).

A signal peptide spans 1–25; that stretch reads MKFTGSPLLWPSWLPLPAPPPPLPS. N-linked (GlcNAc...) asparagine glycosylation is present at asparagine 99. Ca(2+)-binding residues include aspartate 139, aspartate 169, and aspartate 173. The active site involves arginine 226.

This sequence belongs to the polysaccharide lyase 1 family. The cofactor is Ca(2+).

The protein resides in the secreted. The catalysed reaction is Eliminative cleavage of (1-&gt;4)-alpha-D-galacturonan to give oligosaccharides with 4-deoxy-alpha-D-galact-4-enuronosyl groups at their non-reducing ends.. Its pathway is glycan metabolism; pectin degradation; 2-dehydro-3-deoxy-D-gluconate from pectin: step 2/5. Functionally, acts as a virulence factor active in plant tissue maceration. The protein is Pectate lyase B (PLB) of Colletotrichum gloeosporioides (Anthracnose fungus).